The chain runs to 567 residues: Pyrethroid hydrolase Ces2e (567 aa).

The N-terminal stretch at 1 to 36 is a signal peptide; the sequence is MAQTRAWKSIMPLESLPGWLNAVVWGLLLLFCQVQG. Residue Gln37 is modified to Pyrrolidone carboxylic acid. An intrachain disulfide couples Cys105 to Cys132. Ser237 acts as the Acyl-ester intermediate in catalysis. A disulfide bridge links Cys289 with Cys300. Active-site charge relay system residues include Glu354 and His465.

It belongs to the type-B carboxylesterase/lipase family. In terms of tissue distribution, expressed in liver.

It is found in the microsome. The catalysed reaction is all-trans-retinyl hexadecanoate + H2O = all-trans-retinol + hexadecanoate + H(+). The enzyme catalyses (-)-trans-permethrin + H2O = (3-phenoxyphenyl)methanol + (1S,3R)-3-(2,2-dichlorovinyl)-2,2-dimethylcyclopropanecarboxylate + H(+). Functionally, carboxylesterase that catalyzes the hydrolysis of pyrethroids pesticides. Hydrolyzes trans-permethrin at a rate about 22-fold higher than cis-permethrin. Also hydrolyzes trans-cypermethrin. Hydrolyzes retinyl esters. This chain is Pyrethroid hydrolase Ces2e, found in Rattus norvegicus (Rat).